The chain runs to 161 residues: Thy-1 membrane glycoprotein (161 aa).

A signal peptide spans Met-1–Gly-19. Pyrrolidone carboxylic acid is present on Gln-20. Residues Gln-20–Lys-126 form the Ig-like V-type domain. 2 cysteine pairs are disulfide-bonded: Cys-28-Cys-130 and Cys-38-Cys-104. N-linked (GlcNAc...) asparagine glycosylation is found at Asn-42 and Asn-79. The residue at position 82 (Ser-82) is a Phosphoserine. Asn-119 carries N-linked (GlcNAc...) asparagine glycosylation. The GPI-anchor amidated cysteine; alternate moiety is linked to residue Cys-130. Residues Glu-131–Leu-161 constitute a propeptide, removed in mature form. Residue Asn-139 is glycosylated (N-linked (GlcNAc...) asparagine).

Its subcellular location is the cell membrane. Its function is as follows. May play a role in cell-cell or cell-ligand interactions during synaptogenesis and other events in the brain. The sequence is that of Thy-1 membrane glycoprotein (THY1) from Homo sapiens (Human).